A 223-amino-acid chain; its full sequence is uncharacterized protein (223 aa).

The next 7 membrane-spanning stretches (helical) occupy residues 25-45, 46-66, 78-98, 105-125, 140-160, 161-181, and 199-219; these read TYFLLSMTLVTSAIAAMATMA, IGISPIVALVMQLAAIGILFF, LVWTFVFTGLMGGALGPMLNF, GPIVIAQALGLTGMVFLGLSA, FLFAGLIIVIVAALINIFVGS, TVAHLAISSVSALVFSGFILF, and ISMYLNILNLFTSLLSILGIM.

This sequence belongs to the BI1 family.

It is found in the cell membrane. This is an uncharacterized protein from Vibrio cholerae serotype O1 (strain ATCC 39315 / El Tor Inaba N16961).